The following is a 447-amino-acid chain: Crotonyl-CoA reductase (447 aa).

It belongs to the zinc-containing alcohol dehydrogenase family. Crotonyl-CoA carboxylase/reductase subfamily. Homodimer.

The enzyme catalyses butanoyl-CoA + NADP(+) = (2E)-butenoyl-CoA + NADPH + H(+). Its activity is regulated as follows. Inhibited by divalent cations (30-100%), beta-chloromercuribenzoate (85%), iodoacetamide (40%) and N-ethylmaleamide (80%). The presence of CoA thioesters containing 12-20 carbon atoms results in inhibition of enzyme activity. The greatest degree of inhibition is observed in the presence of palmitoyl-CoA and myristoyl-CoA. The branched-chain fatty acids, isopalmitoyl-CoA and isomyristoyl-CoA are less effective inhibitors of the crotonyl-CoA reductase. Concentrations of NADPH above 200 uM lead to inhibition of enzyme activity. Functionally, may play a role in supplying butyryl-CoA for straight-chain fatty acid biosynthesis. Catalyzes the conversion of crotonyl-CoA to butyryl-CoA. It shows a high substrate specificity for crotonyl-CoA, a short-chain-length (C4), but no measurable activity is observed with shorter (C3) or longer-chain-length enoyl-CoA thioesters. This is Crotonyl-CoA reductase (ccr) from Streptomyces collinus.